Here is a 218-residue protein sequence, read N- to C-terminus: Thiamine-phosphate synthase (218 aa).

Residues 45–49 (QYREK) and N77 contribute to the 4-amino-2-methyl-5-(diphosphooxymethyl)pyrimidine site. Positions 78 and 97 each coordinate Mg(2+). S116 lines the 4-amino-2-methyl-5-(diphosphooxymethyl)pyrimidine pocket. 142–144 (TKT) provides a ligand contact to 2-[(2R,5Z)-2-carboxy-4-methylthiazol-5(2H)-ylidene]ethyl phosphate. K145 contributes to the 4-amino-2-methyl-5-(diphosphooxymethyl)pyrimidine binding site. Residues G173 and 193–194 (VT) contribute to the 2-[(2R,5Z)-2-carboxy-4-methylthiazol-5(2H)-ylidene]ethyl phosphate site.

The protein belongs to the thiamine-phosphate synthase family. Mg(2+) is required as a cofactor.

It catalyses the reaction 2-[(2R,5Z)-2-carboxy-4-methylthiazol-5(2H)-ylidene]ethyl phosphate + 4-amino-2-methyl-5-(diphosphooxymethyl)pyrimidine + 2 H(+) = thiamine phosphate + CO2 + diphosphate. It carries out the reaction 2-(2-carboxy-4-methylthiazol-5-yl)ethyl phosphate + 4-amino-2-methyl-5-(diphosphooxymethyl)pyrimidine + 2 H(+) = thiamine phosphate + CO2 + diphosphate. The catalysed reaction is 4-methyl-5-(2-phosphooxyethyl)-thiazole + 4-amino-2-methyl-5-(diphosphooxymethyl)pyrimidine + H(+) = thiamine phosphate + diphosphate. The protein operates within cofactor biosynthesis; thiamine diphosphate biosynthesis; thiamine phosphate from 4-amino-2-methyl-5-diphosphomethylpyrimidine and 4-methyl-5-(2-phosphoethyl)-thiazole: step 1/1. In terms of biological role, condenses 4-methyl-5-(beta-hydroxyethyl)thiazole monophosphate (THZ-P) and 2-methyl-4-amino-5-hydroxymethyl pyrimidine pyrophosphate (HMP-PP) to form thiamine monophosphate (TMP). The protein is Thiamine-phosphate synthase of Pelotomaculum thermopropionicum (strain DSM 13744 / JCM 10971 / SI).